Reading from the N-terminus, the 369-residue chain is UDP-N-acetylglucosamine--N-acetylmuramyl-(pentapeptide) pyrophosphoryl-undecaprenol N-acetylglucosamine transferase (369 aa).

UDP-N-acetyl-alpha-D-glucosamine-binding positions include 15–17 (TGG), Asn126, Arg169, Ser197, and Gln299.

Belongs to the glycosyltransferase 28 family. MurG subfamily.

Its subcellular location is the cell inner membrane. It catalyses the reaction di-trans,octa-cis-undecaprenyl diphospho-N-acetyl-alpha-D-muramoyl-L-alanyl-D-glutamyl-meso-2,6-diaminopimeloyl-D-alanyl-D-alanine + UDP-N-acetyl-alpha-D-glucosamine = di-trans,octa-cis-undecaprenyl diphospho-[N-acetyl-alpha-D-glucosaminyl-(1-&gt;4)]-N-acetyl-alpha-D-muramoyl-L-alanyl-D-glutamyl-meso-2,6-diaminopimeloyl-D-alanyl-D-alanine + UDP + H(+). It participates in cell wall biogenesis; peptidoglycan biosynthesis. Functionally, cell wall formation. Catalyzes the transfer of a GlcNAc subunit on undecaprenyl-pyrophosphoryl-MurNAc-pentapeptide (lipid intermediate I) to form undecaprenyl-pyrophosphoryl-MurNAc-(pentapeptide)GlcNAc (lipid intermediate II). The chain is UDP-N-acetylglucosamine--N-acetylmuramyl-(pentapeptide) pyrophosphoryl-undecaprenol N-acetylglucosamine transferase from Methylorubrum extorquens (strain CM4 / NCIMB 13688) (Methylobacterium extorquens).